The chain runs to 125 residues: Monothiol glutaredoxin-S2 (125 aa).

A Glutaredoxin domain is found at 28-124; that stretch reads AERVGRLVRE…PRLREVGALC (97 aa). A [2Fe-2S] cluster-binding site is contributed by Cys48.

Belongs to the glutaredoxin family. CC-type subfamily.

The protein localises to the cytoplasm. Functionally, may only reduce GSH-thiol disulfides, but not protein disulfides. The protein is Monothiol glutaredoxin-S2 (GRXS2) of Oryza sativa subsp. japonica (Rice).